The sequence spans 623 residues: MSFLLCIGILLLPWFPCVCGKCIFDQIQRSVNVVSPPTAQYASAYRFKTQRSKRHIMPMDNLQPIRIKIWIPSESPALSDWEREKLMSAVGEAVSEVSSLLSVKRVKDRLLLNRDVNKYCKFIWRNSSTLNHMKCGRAHENYRFESCLGVIIPDEHLDGCSVYPNPEHPVPTVLRPRGPGVPDADFLLYVFTHNTEKCRAESSVLAYTAHCQTGSDGRPLAGTMVICRETLKKERYTYQHFVKVTTVIHELFHVLGFSKELLSNWKDFGVDCWSHGQVTSTDQTGQVRLYSPTVIRAMQKHFNSTHTDLGAPLENKDAALDGLSSHWEARVLQGSIMAASLVEASLVRIDAITLAALQDTGWYSVNHSRAQSLVWGEGEGSDFGSVSACHNSSAFFCTGSGLGCHFLHLNKGECVTDQYLDGCHIFKPLANASECWIEDNARSGMNEGGGEIFGSDSRCFISNITRLNNVTAYTPVSGHCYRHRCTGINKYHIQVKDSDWMDCPAGTSIEVSGYQGFIFCPENRLCKYSDLAPPTSTQRTESLFSDTTAQSDLGMMEKDAAVQPSFTSLFLVSEAKISLAAVLSLMAVFALLSAAVLLYRKNLSVRVHAASYRTPLPHILYRN.

Residues 1-20 (MSFLLCIGILLLPWFPCVCG) form the signal peptide. The Extracellular portion of the chain corresponds to 21 to 578 (KCIFDQIQRS…LFLVSEAKIS (558 aa)). Position 249 (H249) interacts with Zn(2+). The active site involves E250. Residues H253 and H326 each contribute to the Zn(2+) site. Residues 579-599 (LAAVLSLMAVFALLSAAVLLY) form a helical membrane-spanning segment. Topologically, residues 600 to 623 (RKNLSVRVHAASYRTPLPHILYRN) are cytoplasmic.

Belongs to the peptidase M8 family. Zn(2+) is required as a cofactor. In terms of tissue distribution, expressed specifically in dorsal forerunner cells (DFCs) that form a ciliated Kupffer's vesicle later.

The protein resides in the membrane. In terms of biological role, plays an essential role for patterning the left-right axis. Requires solely on the left side, downstream of the leftward flow, but upstream of dand5, a nodal inhibitor involved in left-right patterning. The protein is Ciliated left-right organizer metallopeptidase (cirop) of Danio rerio (Zebrafish).